The primary structure comprises 216 residues: Orotate phosphoribosyltransferase (216 aa).

Position 30 (lysine 30) interacts with 5-phospho-alpha-D-ribose 1-diphosphate. 38–39 (FF) serves as a coordination point for orotate. 5-phospho-alpha-D-ribose 1-diphosphate-binding positions include 75–76 (YK), arginine 102, lysine 103, lysine 106, histidine 108, and 128–136 (DDVITAGTA). 2 residues coordinate orotate: threonine 132 and arginine 160.

Belongs to the purine/pyrimidine phosphoribosyltransferase family. PyrE subfamily. As to quaternary structure, homodimer. Mg(2+) is required as a cofactor.

The enzyme catalyses orotidine 5'-phosphate + diphosphate = orotate + 5-phospho-alpha-D-ribose 1-diphosphate. It functions in the pathway pyrimidine metabolism; UMP biosynthesis via de novo pathway; UMP from orotate: step 1/2. Functionally, catalyzes the transfer of a ribosyl phosphate group from 5-phosphoribose 1-diphosphate to orotate, leading to the formation of orotidine monophosphate (OMP). This Acinetobacter baumannii (strain ACICU) protein is Orotate phosphoribosyltransferase.